A 60-amino-acid chain; its full sequence is Large ribosomal subunit protein uL30 (60 aa).

It belongs to the universal ribosomal protein uL30 family. Part of the 50S ribosomal subunit.

This is Large ribosomal subunit protein uL30 from Shewanella denitrificans (strain OS217 / ATCC BAA-1090 / DSM 15013).